Consider the following 86-residue polypeptide: MRALLARLLLCVLVVSDSKGLVSTIESRTSGDGADNFDVVSCNKNCTSGQNECPEGCFCGLLGQNKKGHCYKIIGNLSGEPPVVRR.

Positions M1–G20 are cleaved as a signal peptide. Disulfide bonds link C42–C57, C46–C59, and C53–C70. A glycan (N-linked (GlcNAc...) asparagine) is linked at N45. N76 carries N-linked (GlcNAc...) asparagine glycosylation.

Monomer.

It is found in the secreted. In terms of biological role, salivary chemokine-binding protein which shows chemokine neutralizing activity and binds to host chemokines CXCL1, CXCL2, CXCL3, CXCL5, CXCL6 and CXCL8. Binds to CXCL8 with 1:1 stoichiometry. Disrupts CXCL8 homodimer formation, disrupts the glycosaminoglycan-binding site of CXCL8 and inhibits the interaction of CXCL8 with CXCR2. The chain is Evasin-3 from Rhipicephalus sanguineus (Brown dog tick).